A 386-amino-acid polypeptide reads, in one-letter code: Succinate--CoA ligase [ADP-forming] subunit beta (386 aa).

Positions 9–244 (KELLREFGVA…TTEEDPREVE (236 aa)) constitute an ATP-grasp domain. ATP-binding positions include K46, 53-55 (GRG), E99, S102, and E107. Positions 199 and 213 each coordinate Mg(2+). Substrate contacts are provided by residues N264 and 321–323 (GIM).

The protein belongs to the succinate/malate CoA ligase beta subunit family. In terms of assembly, heterotetramer of two alpha and two beta subunits. It depends on Mg(2+) as a cofactor.

The catalysed reaction is succinate + ATP + CoA = succinyl-CoA + ADP + phosphate. The enzyme catalyses GTP + succinate + CoA = succinyl-CoA + GDP + phosphate. It functions in the pathway carbohydrate metabolism; tricarboxylic acid cycle; succinate from succinyl-CoA (ligase route): step 1/1. Succinyl-CoA synthetase functions in the citric acid cycle (TCA), coupling the hydrolysis of succinyl-CoA to the synthesis of either ATP or GTP and thus represents the only step of substrate-level phosphorylation in the TCA. The beta subunit provides nucleotide specificity of the enzyme and binds the substrate succinate, while the binding sites for coenzyme A and phosphate are found in the alpha subunit. In Exiguobacterium sp. (strain ATCC BAA-1283 / AT1b), this protein is Succinate--CoA ligase [ADP-forming] subunit beta.